The following is a 700-amino-acid chain: Centrosomal protein of 63 kDa (700 aa).

Methionine 1 carries the post-translational modification N-acetylmethionine. 2 coiled-coil regions span residues 73–283 (KEVG…ETFI) and 343–533 (LQAE…MCKK). Phosphoserine is present on residues serine 278, lysine 488, and leucine 492. The disordered stretch occupies residues 570 to 603 (QYKTGHHSPRGQTLDSIDPVARGPSPLSSHISPG). Positions 593–603 (PSPLSSHISPG) are enriched in low complexity.

It belongs to the CEP63 family. Interacts with CEP152 and CDK1; these interactions recruit both ligands to centrosomes. Interacts with CDK2, CDK5RAP2, WDR62, CEP90, KIAA0753/moonraker and CCDC14. CEP63, CDK5RAP2, CEP152, WDR62 are proposed to form a stepwise assembled complex at the centrosome forming a ring near parental centrioles. Interacts with CCDC57; the interaction is required for their location to proximal end of centrioles. Interacts with FXR1; promoting its stabilization. In terms of processing, polyubiquitinated via 'Lys-48'-linked ubiquitin, leading to its degradation. Deubiquitinated by USP36, promoting its stabilization.

It localises to the cytoplasm. Its subcellular location is the cytoskeleton. The protein resides in the microtubule organizing center. It is found in the centrosome. The protein localises to the centriole. It localises to the centriolar satellite. Required for normal spindle assembly. Plays a key role in mother-centriole-dependent centriole duplication; the function also seems to involve CEP152, CDK5RAP2 and WDR62 through a stepwise assembled complex at the centrosome that recruits CDK2 required for centriole duplication. Reported to be required for centrosomal recruitment of CEP152; however, this function has been questioned. Also recruits CDK1 to centrosomes. Plays a role in DNA damage response. Following DNA damage, such as double-strand breaks (DSBs), is removed from centrosomes; this leads to the inactivation of spindle assembly and delay in mitotic progression. Promotes stabilization of FXR1 protein by inhibiting FXR1 ubiquitination. The chain is Centrosomal protein of 63 kDa from Mus musculus (Mouse).